Here is a 224-residue protein sequence, read N- to C-terminus: 7-cyano-7-deazaguanine synthase (224 aa).

Leu10 to Val20 is a binding site for ATP. 4 residues coordinate Zn(2+): Cys189, Cys199, Cys202, and Cys205.

This sequence belongs to the QueC family. Requires Zn(2+) as cofactor.

It catalyses the reaction 7-carboxy-7-deazaguanine + NH4(+) + ATP = 7-cyano-7-deazaguanine + ADP + phosphate + H2O + H(+). It functions in the pathway purine metabolism; 7-cyano-7-deazaguanine biosynthesis. Catalyzes the ATP-dependent conversion of 7-carboxy-7-deazaguanine (CDG) to 7-cyano-7-deazaguanine (preQ(0)). This chain is 7-cyano-7-deazaguanine synthase, found in Stutzerimonas stutzeri (strain A1501) (Pseudomonas stutzeri).